The sequence spans 198 residues: Nucleoside triphosphate pyrophosphatase (198 aa).

Aspartate 70 functions as the Proton acceptor in the catalytic mechanism.

It belongs to the Maf family. It depends on a divalent metal cation as a cofactor.

Its subcellular location is the cytoplasm. The enzyme catalyses a ribonucleoside 5'-triphosphate + H2O = a ribonucleoside 5'-phosphate + diphosphate + H(+). It carries out the reaction a 2'-deoxyribonucleoside 5'-triphosphate + H2O = a 2'-deoxyribonucleoside 5'-phosphate + diphosphate + H(+). In terms of biological role, nucleoside triphosphate pyrophosphatase. May have a dual role in cell division arrest and in preventing the incorporation of modified nucleotides into cellular nucleic acids. This Thermosynechococcus vestitus (strain NIES-2133 / IAM M-273 / BP-1) protein is Nucleoside triphosphate pyrophosphatase.